A 101-amino-acid polypeptide reads, in one-letter code: DNA-binding protein Fis (101 aa).

Positions 77–96 (QTRAANMLGINRGTLRKKLK) form a DNA-binding region, H-T-H motif.

The protein belongs to the transcriptional regulatory Fis family. As to quaternary structure, homodimer.

Functionally, activates ribosomal RNA transcription. Plays a direct role in upstream activation of rRNA promoters. In Shewanella denitrificans (strain OS217 / ATCC BAA-1090 / DSM 15013), this protein is DNA-binding protein Fis.